The sequence spans 214 residues: Urease accessory protein UreG (214 aa).

23 to 30 (GPVGSGKT) serves as a coordination point for GTP.

It belongs to the SIMIBI class G3E GTPase family. UreG subfamily. As to quaternary structure, homodimer. UreD, UreF and UreG form a complex that acts as a GTP-hydrolysis-dependent molecular chaperone, activating the urease apoprotein by helping to assemble the nickel containing metallocenter of UreC. The UreE protein probably delivers the nickel.

The protein resides in the cytoplasm. Its function is as follows. Facilitates the functional incorporation of the urease nickel metallocenter. This process requires GTP hydrolysis, probably effectuated by UreG. This chain is Urease accessory protein UreG, found in Bordetella pertussis (strain Tohama I / ATCC BAA-589 / NCTC 13251).